A 131-amino-acid chain; its full sequence is uncharacterized protein (131 aa).

The interval 16-71 (MSEQERDEVLEDDDDDEDNKSSQQERDEFVEDDDNNSIQSSPSCAQPLLTQYHDDG) is disordered. Positions 20–33 (ERDEVLEDDDDDED) are enriched in acidic residues.

This is an uncharacterized protein from Dictyostelium discoideum (Social amoeba).